The following is a 452-amino-acid chain: Phosphoglucosamine mutase (452 aa).

Ser104 acts as the Phosphoserine intermediate in catalysis. Ser104, Asp246, Asp248, and Asp250 together coordinate Mg(2+). Ser104 is subject to Phosphoserine.

This sequence belongs to the phosphohexose mutase family. Requires Mg(2+) as cofactor. Post-translationally, activated by phosphorylation.

The catalysed reaction is alpha-D-glucosamine 1-phosphate = D-glucosamine 6-phosphate. Its function is as follows. Catalyzes the conversion of glucosamine-6-phosphate to glucosamine-1-phosphate. The protein is Phosphoglucosamine mutase of Streptomyces griseus subsp. griseus (strain JCM 4626 / CBS 651.72 / NBRC 13350 / KCC S-0626 / ISP 5235).